The following is a 427-amino-acid chain: Glutamate-1-semialdehyde 2,1-aminomutase (427 aa).

Lys265 is modified (N6-(pyridoxal phosphate)lysine).

It belongs to the class-III pyridoxal-phosphate-dependent aminotransferase family. HemL subfamily. As to quaternary structure, homodimer. Pyridoxal 5'-phosphate serves as cofactor.

Its subcellular location is the cytoplasm. The catalysed reaction is (S)-4-amino-5-oxopentanoate = 5-aminolevulinate. The protein operates within porphyrin-containing compound metabolism; protoporphyrin-IX biosynthesis; 5-aminolevulinate from L-glutamyl-tRNA(Glu): step 2/2. In Pseudomonas syringae pv. tomato (strain ATCC BAA-871 / DC3000), this protein is Glutamate-1-semialdehyde 2,1-aminomutase.